A 152-amino-acid chain; its full sequence is Nucleoside diphosphate kinase (152 aa).

Residues K10, F58, R86, T92, R103, and N113 each contribute to the ATP site. The active-site Pros-phosphohistidine intermediate is the H116.

This sequence belongs to the NDK family. Requires Mg(2+) as cofactor.

The protein localises to the cytoplasm. The enzyme catalyses a 2'-deoxyribonucleoside 5'-diphosphate + ATP = a 2'-deoxyribonucleoside 5'-triphosphate + ADP. The catalysed reaction is a ribonucleoside 5'-diphosphate + ATP = a ribonucleoside 5'-triphosphate + ADP. Functionally, major role in the synthesis of nucleoside triphosphates other than ATP. The ATP gamma phosphate is transferred to the NDP beta phosphate via a ping-pong mechanism, using a phosphorylated active-site intermediate. In Methanosphaera stadtmanae (strain ATCC 43021 / DSM 3091 / JCM 11832 / MCB-3), this protein is Nucleoside diphosphate kinase.